The sequence spans 137 residues: Basic phospholipase A2 homolog bothropstoxin-I (137 aa).

A signal peptide spans 1–16 (MRTLWIMAVLLVGVEG). 7 disulfides stabilise this stretch: Cys-42–Cys-131, Cys-44–Cys-60, Cys-59–Cys-111, Cys-65–Cys-137, Cys-66–Cys-104, Cys-73–Cys-97, and Cys-91–Cys-102. The interval 121 to 133 (KKYRYHLKPFCKK) is important for membrane-damaging activities in eukaryotes and bacteria; heparin-binding.

It belongs to the phospholipase A2 family. Group II subfamily. K49 sub-subfamily. In terms of assembly, homodimer; non-covalently linked (probable alternative/compact dimer conformation in solution). Binds to heparin. Expressed by the venom gland.

It is found in the secreted. Its activity is regulated as follows. Suramin inhibits both myotoxic and muscle-paralyzing activities. Chicoric acid inhibits myotoxic activity. Zinc ions inhibits the myotoxic activity and the neuromuscular blockade. Heparin inhibits myotoxic activity. Its function is as follows. Snake venom phospholipase A2 homolog that lacks enzymatic activity. Shows local myotoxic activity. Induces inflammation, since it induces edema and leukocytes infiltration. In addition, it induces NLRP3 NLRP3, ASC (PYCARD), caspase-1 (CASP1), and IL-1beta (IL1B) gene expression in the gastrocnemius muscle, showing that it is able to activate NLRP3 inflammasome. It also damages artificial and myoblast membranes by a calcium-independent mechanism, has bactericidal activity, and induces neuromuscular blockade. A model of myotoxic mechanism has been proposed: an apo Lys49-PLA2 is activated by the entrance of a hydrophobic molecule (e.g. fatty acid) at the hydrophobic channel of the protein leading to a reorientation of a monomer. This reorientation causes a transition between 'inactive' to 'active' states, causing alignment of C-terminal and membrane-docking sites (MDoS) side-by-side and putting the membrane-disruption sites (MDiS) in the same plane, exposed to solvent and in a symmetric position for both monomers. The MDoS region stabilizes the toxin on membrane by the interaction of charged residues with phospholipid head groups. Subsequently, the MDiS region destabilizes the membrane with penetration of hydrophobic residues. This insertion causes a disorganization of the membrane, allowing an uncontrolled influx of ions (i.e. calcium and sodium), and eventually triggering irreversible intracellular alterations and cell death. The protein is Basic phospholipase A2 homolog bothropstoxin-I of Bothrops jararacussu (Jararacussu).